Reading from the N-terminus, the 169-residue chain is Myosin regulatory light chain 11 (169 aa).

Ala2 carries the n,N,N-trimethylalanine modification. Phosphoserine occurs at positions 15 and 16. Residues Thr25 and Thr35 each carry the phosphothreonine modification. The region spanning 25-60 is the EF-hand 1 domain; it reads TQIQEFKEAFTVIDQNRDGIIDKEDLRDTFAAMGRL. Asp38, Asn40, Asp42, and Asp49 together coordinate Ca(2+). At Ser75 the chain carries Phosphoserine. EF-hand domains lie at 95–130 and 131–166; these read DPED…QCDR and FSQE…GDAK. A Phosphothreonine modification is found at Thr101.

Myosin is a hexamer of 2 heavy chains and 4 light chains. Expressed in fetal and adult skeletal muscle.

Myosin regulatory subunit that plays an essential role to maintain muscle integrity during early development. Plays a role in muscle contraction. The polypeptide is Myosin regulatory light chain 11 (Homo sapiens (Human)).